A 427-amino-acid chain; its full sequence is Ectonucleoside triphosphate diphosphohydrolase 5 (427 aa).

A signal peptide spans 1 to 24 (MATSWGAVFMLIIACVGSTVFYRE). Glutamate 171 (proton acceptor) is an active-site residue. Asparagine 231 is a glycosylation site (N-linked (GlcNAc...) asparagine). 2 disulfides stabilise this stretch: cysteine 271/cysteine 302 and cysteine 362/cysteine 376.

The protein belongs to the GDA1/CD39 NTPase family. In terms of assembly, monomer; active form. Homodimer; disulfide-linked. Homodimers are enzymatically inactive. Requires Ca(2+) as cofactor. Mg(2+) serves as cofactor. Post-translationally, N-glycosylated; high-mannose type. In terms of tissue distribution, ubiquitous.

It is found in the endoplasmic reticulum. Its subcellular location is the secreted. The catalysed reaction is a ribonucleoside 5'-diphosphate + H2O = a ribonucleoside 5'-phosphate + phosphate + H(+). It catalyses the reaction GDP + H2O = GMP + phosphate + H(+). It carries out the reaction UDP + H2O = UMP + phosphate + H(+). The enzyme catalyses IDP + H2O = IMP + phosphate + H(+). The catalysed reaction is CDP + H2O = CMP + phosphate + H(+). It catalyses the reaction ADP + H2O = AMP + phosphate + H(+). The protein operates within protein modification; protein glycosylation. Its function is as follows. Hydrolyzes nucleoside diphosphates with a preference for GDP, IDP and UDP compared to ADP and CDP. In the lumen of the endoplasmic reticulum, hydrolyzes UDP that acts as an end-product feedback inhibitor of the UDP-Glc:glycoprotein glucosyltransferases. UMP can be transported back by an UDP-sugar antiporter to the cytosol where it is consumed to regenerate UDP-glucose. Therefore, it positively regulates protein reglucosylation by clearing UDP from the ER lumen and by promoting the regeneration of UDP-glucose. Protein reglucosylation is essential to proper glycoprotein folding and quality control in the ER. This is Ectonucleoside triphosphate diphosphohydrolase 5 (Entpd5) from Mus musculus (Mouse).